A 793-amino-acid polypeptide reads, in one-letter code: Putative potassium transporter 12 (793 aa).

The Cytoplasmic segment spans residues 1–54; it reads MASISDSETTNHGSIWDLDQNLDQPMDEEASRLKNMYTEKKFSSILLLRLAFQS. Residues 55-75 traverse the membrane as a helical segment; that stretch reads LGVVFGDLGTSPLYVFYNIFP. Residues 76–87 are Extracellular-facing; the sequence is HGVDDDEDVIGA. The chain crosses the membrane as a helical span at residues 88-108; it reads LSLIIYTLTLIPLMKYVFVVL. Topologically, residues 109–175 are cytoplasmic; that stretch reads RANDNGQGGT…EGHVYKKNCL (67 aa). Residues 176-196 traverse the membrane as a helical segment; that stretch reads LILVLIGTCTAIGDGILTPAI. The Extracellular portion of the chain corresponds to 197–215; the sequence is SVLSASGGIRVQNQKMSTD. Residues 216 to 236 form a helical membrane-spanning segment; the sequence is VVVVVAVIILIGLFSMQHYGT. Residues 237-238 lie on the Cytoplasmic side of the membrane; that stretch reads DK. The chain crosses the membrane as a helical span at residues 239-259; it reads VGWLFAPIVLLWFILIGTIGA. The Extracellular segment spans residues 260-289; the sequence is LNIHKYNSSVLKAYNPVYIYRYFRRGKSES. Asparagine 266 carries N-linked (GlcNAc...) asparagine glycosylation. A helical transmembrane segment spans residues 290 to 310; that stretch reads WTSLGGIMLSITGTEALYADL. Residues 311 to 315 are Cytoplasmic-facing; sequence CHFPV. The helical transmembrane segment at 316 to 338 threads the bilayer; sequence LAIQIAFTLVVFPCLLLAYTGQA. The Extracellular portion of the chain corresponds to 339-359; sequence AYIISNKDHVVDAFYRSIPDT. The chain crosses the membrane as a helical span at residues 360 to 380; that stretch reads IYWPVFIIATLAAIVASQATI. Topologically, residues 381–411 are cytoplasmic; the sequence is SATYSIIKQALALGCFPRVSVVHTSKKFLGQ. Residues 412 to 432 traverse the membrane as a helical segment; it reads IYIPDINWVLMILCIAVTAGF. Residues 433-444 are Extracellular-facing; the sequence is KNQSQIGNAYGT. Asparagine 434 carries an N-linked (GlcNAc...) asparagine glycan. A helical membrane pass occupies residues 445 to 465; it reads AVVIVMLVTTFLMVPIMLLVW. Over 466-468 the chain is Cytoplasmic; sequence KSH. The helical transmembrane segment at 469 to 489 threads the bilayer; sequence WILVVIFIVLSLMVELPYFTA. The Extracellular segment spans residues 490 to 496; that stretch reads CINKVDQ. A helical transmembrane segment spans residues 497 to 517; it reads GGWVPLVVATTCFIIMYVWHF. The Cytoplasmic portion of the chain corresponds to 518 to 793; sequence CTVKRYEFEM…LLNVGQIYYI (276 aa).

The protein belongs to the HAK/KUP transporter (TC 2.A.72.3) family.

It is found in the membrane. In terms of biological role, high-affinity potassium transporter. In Oryza sativa subsp. japonica (Rice), this protein is Putative potassium transporter 12 (HAK12).